We begin with the raw amino-acid sequence, 188 residues long: Adrenodoxin, mitochondrial (188 aa).

A mitochondrion-targeting transit peptide spans 1 to 64 (MAAAPGARLL…RPLSVSARAR (64 aa)). S67 is modified (phosphoserine). One can recognise a 2Fe-2S ferredoxin-type domain in the interval 69 to 175 (DKITVHFKNR…NMTVRVPEAV (107 aa)). K70 is modified (N6-acetyllysine; alternate). K70 is modified (N6-succinyllysine; alternate). [2Fe-2S] cluster contacts are provided by C110, C116, C119, and C156. At K162 the chain carries N6-succinyllysine. S181 bears the Phosphoserine mark.

It belongs to the adrenodoxin/putidaredoxin family. Interacts with CYP11A1. Requires [2Fe-2S] cluster as cofactor.

The protein resides in the mitochondrion matrix. Functionally, essential for the synthesis of various steroid hormones, participates in the reduction of mitochondrial cytochrome P450 for steroidogenesis. Transfers electrons from adrenodoxin reductase to CYP11A1, a cytochrome P450 that catalyzes cholesterol side-chain cleavage. Does not form a ternary complex with adrenodoxin reductase and CYP11A1 but shuttles between the two enzymes to transfer electrons. The polypeptide is Adrenodoxin, mitochondrial (Fdx1) (Mus musculus (Mouse)).